A 291-amino-acid chain; its full sequence is MTTLAIDIGGTKLAAALIDKNLRISQRRELPTPGSKTPGALREALTALVEPLRTEAHQVAIASTGIIQEGMLLALNPHNLGGLLHFPLVQTLETITGLPTLAVNDAQAAAWAEYHALPDDIRDMVFITVSTGVGGGVVCDGKLLTGKGGLAGHLGHTLADPHGPVCGCGRVGCVEAIASGRGMAAAARDDLAGCDAKTLFIRAGEGHQQARQLVRQSAQVVARLVADVKVTTDCQCVVIGGSVGLAEGYLEQVRAFLMQEPAPYHVALSAARYRHDAGLLGAALLAQGDTL.

Residues A5–K12 and G132–C139 contribute to the ATP site. The Zn(2+) site is built by H156, C166, C168, and C173.

The protein belongs to the ROK (NagC/XylR) family. NanK subfamily. As to quaternary structure, homodimer.

The catalysed reaction is an N-acyl-D-mannosamine + ATP = an N-acyl-D-mannosamine 6-phosphate + ADP + H(+). The protein operates within amino-sugar metabolism; N-acetylneuraminate degradation; D-fructose 6-phosphate from N-acetylneuraminate: step 2/5. Catalyzes the phosphorylation of N-acetylmannosamine (ManNAc) to ManNAc-6-P. The polypeptide is N-acetylmannosamine kinase (Salmonella arizonae (strain ATCC BAA-731 / CDC346-86 / RSK2980)).